Consider the following 196-residue polypeptide: MNVVILDTGCANLNSVKSAIARHGYEPKVSRDPDIVLLADKLFLPGVGTAQAAMDQVRERELFDLIKACTQPVLGICLGMQLLGRRSEESNGVDLLGIIDEDVPKMTDFGLPLPHMGWNRVYPQAGNRLFQGIEDGAYFYFVHSYAMPVNPWTIAQCNYGEPFTAAVQKDNFYGVQFHPERSGAAGAKLLKNFLEM.

The Glutamine amidotransferase type-1 domain maps to N2 to M196. The active-site Nucleophile is the C77. Catalysis depends on residues H178 and E180.

As to quaternary structure, heterodimer of HisH and HisF.

The protein resides in the cytoplasm. It carries out the reaction 5-[(5-phospho-1-deoxy-D-ribulos-1-ylimino)methylamino]-1-(5-phospho-beta-D-ribosyl)imidazole-4-carboxamide + L-glutamine = D-erythro-1-(imidazol-4-yl)glycerol 3-phosphate + 5-amino-1-(5-phospho-beta-D-ribosyl)imidazole-4-carboxamide + L-glutamate + H(+). The enzyme catalyses L-glutamine + H2O = L-glutamate + NH4(+). It functions in the pathway amino-acid biosynthesis; L-histidine biosynthesis; L-histidine from 5-phospho-alpha-D-ribose 1-diphosphate: step 5/9. IGPS catalyzes the conversion of PRFAR and glutamine to IGP, AICAR and glutamate. The HisH subunit catalyzes the hydrolysis of glutamine to glutamate and ammonia as part of the synthesis of IGP and AICAR. The resulting ammonia molecule is channeled to the active site of HisF. The protein is Imidazole glycerol phosphate synthase subunit HisH of Shigella flexneri.